A 445-amino-acid polypeptide reads, in one-letter code: UPF0210 protein SMU_73 (445 aa).

Belongs to the UPF0210 family. Homodimer.

The polypeptide is UPF0210 protein SMU_73 (Streptococcus mutans serotype c (strain ATCC 700610 / UA159)).